The primary structure comprises 486 residues: Kynurenine 3-monooxygenase (486 aa).

FAD is bound by residues Val-19, Tyr-37–Arg-40, and Ala-57. Residues Arg-85 and Tyr-99 each coordinate L-kynurenine. Residues Arg-111, Leu-136, Thr-172, Asp-304, and Met-317 to Asn-318 each bind FAD. L-kynurenine-binding residues include Asn-363 and Tyr-398. A run of 2 helical transmembrane segments spans residues Phe-385–Ser-404 and Gly-425–Met-445. N-linked (GlcNAc...) asparagine glycosylation occurs at Asn-465.

Belongs to the aromatic-ring hydroxylase family. KMO subfamily. It depends on FAD as a cofactor. In terms of tissue distribution, highest levels in placenta and liver. Detectable in kidney.

It is found in the mitochondrion outer membrane. It carries out the reaction L-kynurenine + NADPH + O2 + H(+) = 3-hydroxy-L-kynurenine + NADP(+) + H2O. The protein operates within cofactor biosynthesis; NAD(+) biosynthesis; quinolinate from L-kynurenine: step 1/3. Functionally, catalyzes the hydroxylation of L-kynurenine (L-Kyn) to form 3-hydroxy-L-kynurenine (L-3OHKyn). Required for synthesis of quinolinic acid, a neurotoxic NMDA receptor antagonist and potential endogenous inhibitor of NMDA receptor signaling in axonal targeting, synaptogenesis and apoptosis during brain development. Quinolinic acid may also affect NMDA receptor signaling in pancreatic beta cells, osteoblasts, myocardial cells, and the gastrointestinal tract. The sequence is that of Kynurenine 3-monooxygenase from Homo sapiens (Human).